A 534-amino-acid chain; its full sequence is uncharacterized protein (534 aa).

Disordered stretches follow at residues 1–150 (MSDS…DIPP), 252–284 (RRFR…NGQP), and 383–434 (WKSQ…PSLP). The span at 8-67 (SQREDNYSRDRRSRFTEDSYSRRDSQRSGNEAPRESRYYRKEEHLQERSRSRSPARDSRW) shows a compositional bias: basic and acidic residues. A compositionally biased stretch (polar residues) spans 102–113 (SLQSTKATSSRT). The segment covering 130–141 (PSAPAPPLPPSS) has biased composition (pro residues). The segment covering 252 to 262 (RRFRRREDNER) has biased composition (basic and acidic residues). Over residues 263-272 (NNSNSPRNFS) the composition is skewed to low complexity. Residues 393–408 (NQGNRAYNPPNRNQAF) show a composition bias toward polar residues.

This is an uncharacterized protein from Schizosaccharomyces pombe (strain 972 / ATCC 24843) (Fission yeast).